Here is a 173-residue protein sequence, read N- to C-terminus: MTREEKAQVIEALTAQLAENPTIYLADISGLDAGSTSNLRRACFKANVKLAVVKNTLLAKAMEAAEKDFGELPTVLKGNTSIMLSETGNAPAKVIKEFRKKSEKPLLKGAFVEEAIYVGDDYLDTLVNIKSKEEVIGDIVGLLQSPAKNVVSALKSGGGKIAGILKTLSEKEG.

Belongs to the universal ribosomal protein uL10 family. As to quaternary structure, part of the ribosomal stalk of the 50S ribosomal subunit. The N-terminus interacts with L11 and the large rRNA to form the base of the stalk. The C-terminus forms an elongated spine to which L12 dimers bind in a sequential fashion forming a multimeric L10(L12)X complex.

Its function is as follows. Forms part of the ribosomal stalk, playing a central role in the interaction of the ribosome with GTP-bound translation factors. This is Large ribosomal subunit protein uL10 from Christiangramia forsetii (strain DSM 17595 / CGMCC 1.15422 / KT0803) (Gramella forsetii).